The following is a 79-amino-acid chain: Sec-independent protein translocase protein TatA (79 aa).

A helical membrane pass occupies residues Met-1 to Phe-21. The interval Glu-48–Ser-79 is disordered. Basic and acidic residues predominate over residues Lys-66–Ser-79.

The protein belongs to the TatA/E family. As to quaternary structure, the Tat system comprises two distinct complexes: a TatABC complex, containing multiple copies of TatA, TatB and TatC subunits, and a separate TatA complex, containing only TatA subunits. Substrates initially bind to the TatABC complex, which probably triggers association of the separate TatA complex to form the active translocon.

It localises to the cell inner membrane. Functionally, part of the twin-arginine translocation (Tat) system that transports large folded proteins containing a characteristic twin-arginine motif in their signal peptide across membranes. TatA could form the protein-conducting channel of the Tat system. This Helicobacter pylori (strain Shi470) protein is Sec-independent protein translocase protein TatA.